The sequence spans 80 residues: Defensin-like protein 276 (80 aa).

Residues 1–24 (MSGQKYQLVSLLLIICLLFSQSTA) form the signal peptide. 4 disulfide bridges follow: Cys-27/Cys-67, Cys-33/Cys-55, Cys-39/Cys-65, and Cys-43/Cys-66.

The protein belongs to the DEFL family.

Its subcellular location is the secreted. The sequence is that of Defensin-like protein 276 from Arabidopsis thaliana (Mouse-ear cress).